Reading from the N-terminus, the 486-residue chain is Transcriptional regulator ERG (486 aa).

Residues 41–54 show a composition bias toward polar residues; that stretch reads TASSSSDYGQTSKM. Disordered stretches follow at residues 41-62 and 79-99; these read TASSSSDYGQTSKMSPRVPQQD and PSQVNGSRNSPDECSVNKGGK. A phosphoserine mark is found at serine 55, serine 88, and serine 103. Residues 120 to 206 enclose the PNT domain; that stretch reads VPPPNMTTNE…SHLHYLRETP (87 aa). A disordered region spans residues 249–311; the sequence is QRITTRPDLP…ILGPTSSRLA (63 aa). The span at 271–284 shows a compositional bias: polar residues; the sequence is SHLTPQSKAAQPSP. A Glycyl lysine isopeptide (Lys-Gly) (interchain with G-Cter in SUMO2) cross-link involves residue lysine 289. A DNA-binding region (ETS) is located at residues 318 to 398; sequence IQLWQFLLEL…HGKRYAYKFD (81 aa).

The protein belongs to the ETS family. Identified in a IGF2BP1-dependent mRNP granule complex containing untranslated mRNAs. Interacts with SETDB1.

It is found in the nucleus. The protein localises to the cytoplasm. In terms of biological role, transcriptional regulator. May participate in transcriptional regulation through the recruitment of SETDB1 histone methyltransferase and subsequent modification of local chromatin structure. The polypeptide is Transcriptional regulator ERG (Erg) (Mus musculus (Mouse)).